Reading from the N-terminus, the 1010-residue chain is Peroxisome proliferator-activated receptor gamma coactivator 1-beta (1010 aa).

An abolishes DNA transcriptional activity when missing region spans residues 1 to 91 (MAGNDCGALL…FFQIDSENEA (91 aa)). The disordered stretch occupies residues 115-134 (GLDEGDTPSCTPASPAPLSV). Residues 140-144 (LERLL) carry the LXXLL motif 1 motif. S145 and S148 each carry phosphoserine. Positions 156 to 160 (LQKLL) match the LXXLL motif 2 motif. 3 disordered regions span residues 165–214 (SPTA…RPCT), 227–282 (PRGK…QVPK), and 306–329 (PQRASEPIPQSCSSPLRKVPPRSR). Polar residues-rich tracts occupy residues 178–189 (TWSQTSLSSRSQ) and 264–279 (PQDSLGQDTANPNSAQ). Residues 342–346 (LRELL) carry the LXXLL motif 3 motif. A compositionally biased stretch (polar residues) spans 369-384 (TPQSRTRPPKDSQASP). Disordered stretches follow at residues 369 to 475 (TPQS…VCPV), 517 to 567 (GLTD…CLML), and 590 to 674 (GTAG…QKRP). S383 carries the post-translational modification Phosphoserine. Over residues 411–428 (LRLEVKRDVNKPARQKRE) the composition is skewed to basic and acidic residues. The span at 429 to 449 (EDEEEEEEEEEEEEKEDEEEE) shows a compositional bias: acidic residues. The span at 521–532 (SSQGQQLPLGSQ) shows a compositional bias: low complexity. Residues 604 to 618 (PMEEDPFKQDTKHSP) show a composition bias toward basic and acidic residues. Composition is skewed to polar residues over residues 619–638 (GQDTAPSLPSPETLQLTATP) and 659–670 (QHATTQPVSQAG). Residue S628 is modified to Phosphoserine. The HCFC1-binding-motif (HBM) signature appears at 681–684 (DHDY). Disordered stretches follow at residues 714-744 (HQGATLPVETKTPRREADQNCDPTPKDSMQL) and 778-881 (DTVF…KKRR). Residues 782 to 794 (EDSSSSSGESSFL) show a composition bias toward low complexity. A compositionally biased stretch (acidic residues) spans 795-811 (LEEEEEEGGEEDDEGED). The segment covering 832 to 852 (SRQLCSRSRSSSGSSSCSSWS) has biased composition (low complexity). The RRM domain maps to 889–963 (RVVYIRNLSG…RNEPSFHLSY (75 aa)).

Interacts with estrogen receptor alpha/ESR1. Interacts with Sterol regulatory binding transcription factor 1/SREBF1, PPAR-alpha/PPARA, thyroid hormone receptor beta/THRB and host cell factor/HCFC1. Interacts with Estrogen-related receptor gamma/ESRRG and alpha/ESRRA. Interacts with PRDM16. Ubiquitous with higher expression in heart, brown adipose tissue.

Its subcellular location is the nucleus. In terms of biological role, plays a role of stimulator of transcription factors and nuclear receptors activities. Activates transcriptional activity of estrogen receptor alpha, nuclear respiratory factor 1 (NRF1) and glucocorticoid receptor in the presence of glucocorticoids. May play a role in constitutive non-adrenergic-mediated mitochondrial biogenesis as suggested by increased basal oxygen consumption and mitochondrial number when overexpressed. May be part of the pathways regulating the elevation of gluconeogenesis, beta-oxidation of fatty acids and ketogenesis during fasting. Stimulates SREBP-mediated lipogenic gene expression in the liver. Induces energy expenditure and antagonizes obesity when overexpressed. Also induces the expression of mitochondrial genes involved in oxidative metabolism. Induces the expression of PERM1 in the skeletal muscle in an ESRRA-dependent manner. The polypeptide is Peroxisome proliferator-activated receptor gamma coactivator 1-beta (Ppargc1b) (Rattus norvegicus (Rat)).